The sequence spans 269 residues: 1-(5-phosphoribosyl)-5-[(5-phosphoribosylamino)methylideneamino] imidazole-4-carboxamide isomerase (269 aa).

Asp-10 (proton acceptor) is an active-site residue. The active-site Proton donor is Asp-132.

Belongs to the HisA/HisF family.

It localises to the cytoplasm. The catalysed reaction is 1-(5-phospho-beta-D-ribosyl)-5-[(5-phospho-beta-D-ribosylamino)methylideneamino]imidazole-4-carboxamide = 5-[(5-phospho-1-deoxy-D-ribulos-1-ylimino)methylamino]-1-(5-phospho-beta-D-ribosyl)imidazole-4-carboxamide. It functions in the pathway amino-acid biosynthesis; L-histidine biosynthesis; L-histidine from 5-phospho-alpha-D-ribose 1-diphosphate: step 4/9. The polypeptide is 1-(5-phosphoribosyl)-5-[(5-phosphoribosylamino)methylideneamino] imidazole-4-carboxamide isomerase (Xylella fastidiosa (strain Temecula1 / ATCC 700964)).